The chain runs to 70 residues: Turripeptide OL179 (70 aa).

The first 21 residues, 1 to 21 (MMAKQVVVLLALLLLLPIVTA), serve as a signal peptide directing secretion. Residues 22–32 (SMGDASGRTGR) constitute a propeptide that is removed on maturation.

As to expression, expressed by the venom duct.

The protein resides in the secreted. In terms of biological role, acts as a neurotoxin by inhibiting an ion channel. The polypeptide is Turripeptide OL179 (Iotyrris olangoensis (Sea snail)).